The primary structure comprises 404 residues: Glucose-1-phosphate adenylyltransferase (404 aa).

Residues tyrosine 99, glycine 164, 179–180, and serine 197 each bind alpha-D-glucose 1-phosphate; that span reads EK.

Belongs to the bacterial/plant glucose-1-phosphate adenylyltransferase family.

It catalyses the reaction alpha-D-glucose 1-phosphate + ATP + H(+) = ADP-alpha-D-glucose + diphosphate. Its pathway is glycan biosynthesis; glycogen biosynthesis. In terms of biological role, involved in the biosynthesis of ADP-glucose, a building block, required in the biosynthesis of maltose-1-phosphate (M1P) and in the elongation reactions to produce linear alpha-1,4-glucans. Catalyzes the reaction between ATP and alpha-D-glucose 1-phosphate (G1P) to produce pyrophosphate and ADP-Glc. This is Glucose-1-phosphate adenylyltransferase from Mycolicibacterium vanbaalenii (strain DSM 7251 / JCM 13017 / BCRC 16820 / KCTC 9966 / NRRL B-24157 / PYR-1) (Mycobacterium vanbaalenii).